The sequence spans 335 residues: tRNA N6-adenosine threonylcarbamoyltransferase (335 aa).

A divalent metal cation is bound by residues H109, H113, and Y130. Substrate contacts are provided by residues 130–134 (YVSGG), D162, G177, E181, and N266. Residue D294 coordinates a divalent metal cation.

Belongs to the KAE1 / TsaD family. As to quaternary structure, component of the EKC/KEOPS complex composed of at least GON7, TP53RK, TPRKB, OSGEP and LAGE3; the whole complex dimerizes. Interacts with PRAME. A divalent metal cation serves as cofactor. Widely expressed at low level. Expressed in heart, placenta, liver, kidney, lung, brain, skeletal muscle and pancreas.

It localises to the cytoplasm. The protein resides in the nucleus. It catalyses the reaction L-threonylcarbamoyladenylate + adenosine(37) in tRNA = N(6)-L-threonylcarbamoyladenosine(37) in tRNA + AMP + H(+). Component of the EKC/KEOPS complex that is required for the formation of a threonylcarbamoyl group on adenosine at position 37 (t(6)A37) in tRNAs that read codons beginning with adenine. The complex is probably involved in the transfer of the threonylcarbamoyl moiety of threonylcarbamoyl-AMP (TC-AMP) to the N6 group of A37. OSGEP likely plays a direct catalytic role in this reaction, but requires other protein(s) of the complex to fulfill this activity. This is tRNA N6-adenosine threonylcarbamoyltransferase from Homo sapiens (Human).